The sequence spans 240 residues: UPF0502 protein Veis_2102 (240 aa).

The protein belongs to the UPF0502 family.

The sequence is that of UPF0502 protein Veis_2102 from Verminephrobacter eiseniae (strain EF01-2).